An 863-amino-acid polypeptide reads, in one-letter code: Dipeptidyl peptidase 9 (863 aa).

The disordered stretch occupies residues 1 to 20 (MATTGTPTADRGDAAATDDP). The residue at position 2 (Ala-2) is an N-acetylalanine. Residues Ser-730, Asp-808, and His-840 each act as charge relay system in the active site. Ser-730 contributes to the Val-boroPro binding site.

It belongs to the peptidase S9B family. DPPIV subfamily. As to quaternary structure, homodimer. Forms a ternary complex with NLRP1, composed of a DPP9 homodimer, one full-length NLRP1 protein, and one cleaved C-terminus of NLRP1 (NACHT, LRR and PYD domains-containing protein 1, C-terminus). Forms a ternary complex with CARD8, composed of a DPP9 homodimer, one full-length NLRP1 protein, and one cleaved C-terminus of CARD8 (Caspase recruitment domain-containing protein 8, C-terminus). In the ternary complex, only one subunit of the DPP9 homodimer is bound to NLRP1 or CARD8. Ubiquitously expressed, with highest levels in liver, heart and muscle, and lowest levels in brain.

It localises to the cytoplasm. It is found in the cytosol. Its subcellular location is the nucleus. The catalysed reaction is Release of an N-terminal dipeptide, Xaa-Yaa-|-Zaa-, from a polypeptide, preferentially when Yaa is Pro, provided Zaa is neither Pro nor hydroxyproline.. With respect to regulation, inhibited by the serine proteinase inhibitor 4-(2-aminoethyl)benzenesulphonyl fluoride (AEBSF), and by di-isopropylfluorophosphate. Inhibited by Val-boroPro (Talabostat, PT-100), a non-selective inhibitor, which triggers pyroptosis in monocytes and macrophages. Val-boroPro inhibits activity by binding to the active site, mimicking a substrate-bound state, thereby displacing the C-terminal fragment of NLRP1, leading to activation of the NLRP1 inflammasome. In contrast, Val-boroPro does not directly displaces CARD8: it acts by promoting degradation of the N-terminal part of CARD8, leading to indirect disruption of the ternary complex. Chemical inhibition of DPP9 by Val-boroPro in HIV-1-infected cells activates the CARD8 inflammasome, triggering cell death, offering a promising strategy for the elimination of HIV-1 reservoirs in people living with HIV-1. In terms of biological role, dipeptidyl peptidase that cleaves off N-terminal dipeptides from proteins having a Pro or Ala residue at position 2. Acts as a key inhibitor of caspase-1-dependent monocyte and macrophage pyroptosis in resting cells by preventing activation of NLRP1 and CARD8. Sequesters the cleaved C-terminal part of NLRP1 and CARD8, which respectively constitute the active part of the NLRP1 and CARD8 inflammasomes, in a ternary complex, thereby preventing their oligomerization and activation. The dipeptidyl peptidase activity is required to suppress NLRP1 and CARD8; however, neither NLRP1 nor CARD8 are bona fide substrates of DPP9, suggesting the existence of substrate(s) required for NLRP1 and CARD8 inhibition. The polypeptide is Dipeptidyl peptidase 9 (Homo sapiens (Human)).